We begin with the raw amino-acid sequence, 442 residues long: MLDILLLRKDLASAVARLETRKKPQAFLNVEAFQALESERKTIQMRTEELQSQRNQLSKQIGMLMGKGEKDAAEAAKAQVAAIKAELDGSATRLDQIQGELQSMLAAVPNLPHESVPVGSDESANVEVRRWSPDGPQPRSLGFTPKDHVDLGEPLGLDFDMGVKLSGSRFTVMKGGIARLHRALAQFMLDVQTQEHGYTECYVPYVVNADSLKGTGQLPKFEGDLFAAQKGGQDAEPVPDNAQLYLIPTSEVPLTNFVRDEVLAEAQLPLKLTAHTPCFRSEAGSYGRDTRGMIRQHQFDKVEMVQIVHPDKSYEALEEMTRHAEAVLQKLGLPYRVMSLCTGDMGFGAAKTYDLEVWLPAQNTYREISSVSNCEAFQARRLQARFKNAQGKNELVHTLNGSGLAVGRTLVAVLENYQNEDGSVTIPEVLRPYMGGQATLPV.

Residue 249–251 participates in L-serine binding; it reads TSE. 280-282 is an ATP binding site; it reads RSE. Residue E303 participates in L-serine binding. 367–370 is an ATP binding site; the sequence is EISS. S402 is a binding site for L-serine.

It belongs to the class-II aminoacyl-tRNA synthetase family. Type-1 seryl-tRNA synthetase subfamily. In terms of assembly, homodimer. The tRNA molecule binds across the dimer.

The protein resides in the cytoplasm. It catalyses the reaction tRNA(Ser) + L-serine + ATP = L-seryl-tRNA(Ser) + AMP + diphosphate + H(+). It carries out the reaction tRNA(Sec) + L-serine + ATP = L-seryl-tRNA(Sec) + AMP + diphosphate + H(+). Its pathway is aminoacyl-tRNA biosynthesis; selenocysteinyl-tRNA(Sec) biosynthesis; L-seryl-tRNA(Sec) from L-serine and tRNA(Sec): step 1/1. Catalyzes the attachment of serine to tRNA(Ser). Is also able to aminoacylate tRNA(Sec) with serine, to form the misacylated tRNA L-seryl-tRNA(Sec), which will be further converted into selenocysteinyl-tRNA(Sec). This is Serine--tRNA ligase from Acidovorax ebreus (strain TPSY) (Diaphorobacter sp. (strain TPSY)).